The primary structure comprises 331 residues: Anthranilate phosphoribosyltransferase (331 aa).

5-phospho-alpha-D-ribose 1-diphosphate is bound by residues glycine 79, 82–83, serine 87, 89–92, 107–115, and serine 119; these read GD, NIST, and KHCNSSISG. Glycine 79 serves as a coordination point for anthranilate. Serine 91 lines the Mg(2+) pocket. Anthranilate is bound at residue asparagine 110. An anthranilate-binding site is contributed by arginine 165. 2 residues coordinate Mg(2+): aspartate 223 and glutamate 224.

This sequence belongs to the anthranilate phosphoribosyltransferase family. In terms of assembly, homodimer. Mg(2+) serves as cofactor.

The catalysed reaction is N-(5-phospho-beta-D-ribosyl)anthranilate + diphosphate = 5-phospho-alpha-D-ribose 1-diphosphate + anthranilate. Its pathway is amino-acid biosynthesis; L-tryptophan biosynthesis; L-tryptophan from chorismate: step 2/5. Functionally, catalyzes the transfer of the phosphoribosyl group of 5-phosphorylribose-1-pyrophosphate (PRPP) to anthranilate to yield N-(5'-phosphoribosyl)-anthranilate (PRA). The protein is Anthranilate phosphoribosyltransferase of Buchnera aphidicola subsp. Melaphis rhois.